We begin with the raw amino-acid sequence, 520 residues long: Cell adhesion molecule CEACAM2 (520 aa).

Positions 1–34 (MELASAHLHKGQVPWFGLLLTASLLASWSPPTTA) are cleaved as a signal peptide. Positions 35–141 (QVTVMAFPLH…RVLTGQFHVH (107 aa)) constitute an Ig-like V-type domain. Residues 35–422 (QVTVMAFPLH…IFDSTYDISD (388 aa)) are Extracellular-facing. Asn-87, Asn-104, Asn-148, Asn-152, Asn-175, Asn-199, Asn-206, Asn-210, Asn-226, Asn-258, Asn-290, Asn-294, Asn-304, Asn-317, Asn-333, and Asn-361 each carry an N-linked (GlcNAc...) asparagine glycan. Ig-like C2-type domains follow at residues 145 to 234 (LKSN…FSLN), 239 to 319 (PDTP…KNIT), and 327 to 411 (PSLQ…IKLE). Cys-167 and Cys-217 are oxidised to a cystine. Cysteines 261 and 301 form a disulfide. A disulfide bridge links Cys-346 with Cys-394. A helical transmembrane segment spans residues 423 to 443 (VPIAVIITGAVAGVILIAGLA). Over 444–520 (YRLCSRKSRW…ETVYSEVKKK (77 aa)) the chain is Cytoplasmic. The segment at 457–520 (QRDLTEHKPS…ETVYSEVKKK (64 aa)) is disordered. The span at 466-480 (SASNHNLAPSDNSPN) shows a compositional bias: polar residues. At Tyr-487 the chain carries Phosphotyrosine. The span at 490–513 (LNFNSQQPNRPTSAPSSPRATETV) shows a compositional bias: polar residues. Ser-502 carries the post-translational modification Phosphoserine. Tyr-514 is subject to Phosphotyrosine.

The protein belongs to the immunoglobulin superfamily. CEA family. Interacts weakly with MHV spike protein in tissue culture. Isoform 2 is detected in elongating spermatids within the seminiferous epithelium (at protein level). Expressed in kidney, colon, uterus, gut mononuclear cells, crypt epithelia of intestinal tissues, and to a lesser extent, in spleen. Expressed in brain including VMH, globus pallidus, ventral pallidum, striatum, olfactory bulb and hippocampus. Also detected in rectal carcinoma cell line CMT93. Isoform 2 and isoform 3 are expressed in testis. Isoform 2 is detected in seminiferous tubule, not detected in epididymal spermatozoa. Also not observed on spermatogonia, spermatocytes, round spermatids or somatic Sertoli cells. During stages I-VII of spermatogenesis, detected on the elongating spermatids. At spermiation (stage VIII) and subsequent stages IX-XII, levels are drastically reduced or absent in the seminiferous tubules. Sometimes weakly detected in the apical region of stage-VIII seminiferous epithelium. Isoform 2 level is very low in stomach, kidney, intestine, liver and spleen.

Its subcellular location is the cell membrane. Controls energy balance and peripheral insulin action. Involved in the regulation of feeding behavior particularly in the ventromedial nucleus of hypothalamus (VMH) regulation of food intake. Has a role in the regulation of metabolic rate and insulin sensitivity or resistance via effects on brown adipogenesis, sympathetic nervous outflow to brown adipose tissue, spontaneous activity and energy expenditure in skeletal muscle. In case of murine coronavirus (MHV) infection, does probably not serve as functional receptor for the virus. Functionally, isoform 2 may be an adhesion molecule contributing to cell to cell adhesion between elongating spermatids and Sertoli cells within the seminiferous epithelium. This chain is Cell adhesion molecule CEACAM2, found in Mus musculus (Mouse).